A 259-amino-acid polypeptide reads, in one-letter code: NAD kinase (259 aa).

Asp49 serves as the catalytic Proton acceptor. Residues 49-50 (DG), Arg54, 118-119 (NE), Asp148, Ala156, 159-164 (TAYNYS), and Ala183 contribute to the NAD(+) site.

Belongs to the NAD kinase family. It depends on a divalent metal cation as a cofactor.

It localises to the cytoplasm. It carries out the reaction NAD(+) + ATP = ADP + NADP(+) + H(+). Its function is as follows. Involved in the regulation of the intracellular balance of NAD and NADP, and is a key enzyme in the biosynthesis of NADP. Catalyzes specifically the phosphorylation on 2'-hydroxyl of the adenosine moiety of NAD to yield NADP. This is NAD kinase from Xylella fastidiosa (strain Temecula1 / ATCC 700964).